Reading from the N-terminus, the 107-residue chain is Translation initiation factor IF-1, chloroplastic (107 aa).

An S1-like domain is found at 8-83 (REKKNPREAK…SKGRIIYRLP (76 aa)). The segment at 81 to 107 (RLPHKDSKRTEDSKDTEDLKDTKDSKG) is disordered. Residues 83 to 107 (PHKDSKRTEDSKDTEDLKDTKDSKG) show a composition bias toward basic and acidic residues.

The protein belongs to the IF-1 family. In terms of assembly, component of the 30S ribosomal translation pre-initiation complex which assembles on the 30S ribosome in the order IF-2 and IF-3, IF-1 and N-formylmethionyl-tRNA(fMet); mRNA recruitment can occur at any time during PIC assembly.

The protein localises to the plastid. The protein resides in the chloroplast. Functionally, one of the essential components for the initiation of protein synthesis. Stabilizes the binding of IF-2 and IF-3 on the 30S subunit to which N-formylmethionyl-tRNA(fMet) subsequently binds. Helps modulate mRNA selection, yielding the 30S pre-initiation complex (PIC). Upon addition of the 50S ribosomal subunit IF-1, IF-2 and IF-3 are released leaving the mature 70S translation initiation complex. This Oryza sativa subsp. indica (Rice) protein is Translation initiation factor IF-1, chloroplastic.